The sequence spans 125 residues: Holo-[acyl-carrier-protein] synthase (125 aa).

Positions 8 and 57 each coordinate Mg(2+).

Belongs to the P-Pant transferase superfamily. AcpS family. Mg(2+) serves as cofactor.

It is found in the cytoplasm. It catalyses the reaction apo-[ACP] + CoA = holo-[ACP] + adenosine 3',5'-bisphosphate + H(+). Functionally, transfers the 4'-phosphopantetheine moiety from coenzyme A to a Ser of acyl-carrier-protein. The chain is Holo-[acyl-carrier-protein] synthase from Koribacter versatilis (strain Ellin345).